A 106-amino-acid polypeptide reads, in one-letter code: Phosphoribosyl-ATP pyrophosphatase (106 aa).

This sequence belongs to the PRA-PH family.

It localises to the cytoplasm. It carries out the reaction 1-(5-phospho-beta-D-ribosyl)-ATP + H2O = 1-(5-phospho-beta-D-ribosyl)-5'-AMP + diphosphate + H(+). The protein operates within amino-acid biosynthesis; L-histidine biosynthesis; L-histidine from 5-phospho-alpha-D-ribose 1-diphosphate: step 2/9. This is Phosphoribosyl-ATP pyrophosphatase from Limosilactobacillus fermentum (strain NBRC 3956 / LMG 18251) (Lactobacillus fermentum).